We begin with the raw amino-acid sequence, 203 residues long: ATP-dependent Clp protease proteolytic subunit 2 (203 aa).

Residue S100 is the Nucleophile of the active site. Residue H125 is part of the active site.

This sequence belongs to the peptidase S14 family. As to quaternary structure, fourteen ClpP subunits assemble into 2 heptameric rings which stack back to back to give a disk-like structure with a central cavity, resembling the structure of eukaryotic proteasomes.

Its subcellular location is the cytoplasm. It catalyses the reaction Hydrolysis of proteins to small peptides in the presence of ATP and magnesium. alpha-casein is the usual test substrate. In the absence of ATP, only oligopeptides shorter than five residues are hydrolyzed (such as succinyl-Leu-Tyr-|-NHMec, and Leu-Tyr-Leu-|-Tyr-Trp, in which cleavage of the -Tyr-|-Leu- and -Tyr-|-Trp bonds also occurs).. In terms of biological role, cleaves peptides in various proteins in a process that requires ATP hydrolysis. Has a chymotrypsin-like activity. Plays a major role in the degradation of misfolded proteins. The polypeptide is ATP-dependent Clp protease proteolytic subunit 2 (Thermobifida fusca (strain YX)).